A 259-amino-acid polypeptide reads, in one-letter code: uncharacterized protein (259 aa).

The region spanning 19-249 (TKIPGAKYVI…DEVINTIKKK (231 aa)) is the Radical SAM core domain. The [4Fe-4S] cluster site is built by C34, C38, and C41.

The cofactor is [4Fe-4S] cluster.

This is an uncharacterized protein from Methanocaldococcus jannaschii (strain ATCC 43067 / DSM 2661 / JAL-1 / JCM 10045 / NBRC 100440) (Methanococcus jannaschii).